Consider the following 282-residue polypeptide: 4-diphosphocytidyl-2-C-methyl-D-erythritol kinase (282 aa).

Residue Lys9 is part of the active site. 98 to 108 (PMGGGLGGGSS) contributes to the ATP binding site. Residue Asp140 is part of the active site.

The protein belongs to the GHMP kinase family. IspE subfamily. Homodimer.

The enzyme catalyses 4-CDP-2-C-methyl-D-erythritol + ATP = 4-CDP-2-C-methyl-D-erythritol 2-phosphate + ADP + H(+). The protein operates within isoprenoid biosynthesis; isopentenyl diphosphate biosynthesis via DXP pathway; isopentenyl diphosphate from 1-deoxy-D-xylulose 5-phosphate: step 3/6. Its function is as follows. Catalyzes the phosphorylation of the position 2 hydroxy group of 4-diphosphocytidyl-2C-methyl-D-erythritol. The sequence is that of 4-diphosphocytidyl-2-C-methyl-D-erythritol kinase from Salmonella heidelberg (strain SL476).